Reading from the N-terminus, the 137-residue chain is Basic phospholipase A2 homolog Ts-R6 (137 aa).

The signal sequence occupies residues 1–16; the sequence is MRTLWIMAVLLLGVEG. Intrachain disulfides connect cysteine 42–cysteine 130, cysteine 44–cysteine 60, cysteine 59–cysteine 110, cysteine 65–cysteine 137, cysteine 66–cysteine 103, cysteine 73–cysteine 97, and cysteine 91–cysteine 101.

As to expression, expressed by the venom gland.

It is found in the secreted. In terms of biological role, snake venom phospholipase A2 homolog that induces local edema a few hours after injection (5-10 ug) in the hind paw and shows weak anticoagulant and myotoxic activities. The chain is Basic phospholipase A2 homolog Ts-R6 from Trimeresurus stejnegeri (Chinese green tree viper).